A 123-amino-acid chain; its full sequence is uncharacterized protein (123 aa).

Disordered regions lie at residues 1–33 (MAPP…RRRK) and 82–123 (EKAA…EDKS). Over residues 18–33 (KLFKRRRVLSRDRRRK) the composition is skewed to basic residues.

This is an uncharacterized protein from Mus musculus (Mouse).